A 128-amino-acid chain; its full sequence is Protein Wnt-10 (128 aa).

Cystine bridges form between cysteine 3-cysteine 17, cysteine 5-cysteine 12, cysteine 74-cysteine 105, cysteine 90-cysteine 100, and cysteine 127-cysteine 128. Serine 9 carries O-palmitoleoyl serine; by PORCN lipidation. A glycan (N-linked (GlcNAc...) asparagine) is linked at asparagine 91.

This sequence belongs to the Wnt family. In terms of processing, palmitoleoylation is required for efficient binding to frizzled receptors. Depalmitoleoylation leads to Wnt signaling pathway inhibition. As to expression, in embryo, in dorsal hindbrain; in adults, in brain.

Its subcellular location is the secreted. The protein resides in the extracellular space. It is found in the extracellular matrix. In terms of biological role, ligand for members of the frizzled family of seven transmembrane receptors. Probable developmental protein. May be a signaling molecule which affects the development of discrete regions of tissues. Is likely to signal over only few cell diameters. In Xenopus laevis (African clawed frog), this protein is Protein Wnt-10 (wnt10).